The sequence spans 255 residues: uncharacterized protein (255 aa).

The signal sequence occupies residues 1 to 23 (MKRLNTLVLYISFLILIISIVAG). C24 carries the N-palmitoyl cysteine lipid modification. C24 carries S-diacylglycerol cysteine lipidation.

It belongs to the staphylococcal tandem lipoprotein family.

It localises to the cell membrane. This is an uncharacterized protein from Staphylococcus aureus (strain N315).